The sequence spans 770 residues: NAD-dependent malic enzyme (770 aa).

Residues 1–440 are malic enzyme; sequence MNTGDKAKSQ…KLNRFVFRSG (440 aa). K107 (proton acceptor) is an active-site residue. A divalent metal cation contacts are provided by E149 and D150. NAD(+) contacts are provided by D175 and N300. The tract at residues 441–770 is phosphate acetyltransferase; the sequence is FIMKPVFAAA…LAVVESSHPV (330 aa).

It in the N-terminal section; belongs to the malic enzymes family. In the C-terminal section; belongs to the phosphate acetyltransferase and butyryltransferase family. In terms of assembly, homooctamer. The cofactor is Mg(2+). Mn(2+) is required as a cofactor.

The catalysed reaction is (S)-malate + NAD(+) = pyruvate + CO2 + NADH. With respect to regulation, subject to substrate inhibition and shows allosteric regulation by acetyl-CoA. Required for symbiotic nitrogen fixation. Plays a key role in the conversion of malate to acetyl-CoA for efficient tricarboxylic acid cycle function in nitrogen-fixating bacteria. In Rhizobium meliloti (strain 1021) (Ensifer meliloti), this protein is NAD-dependent malic enzyme (dme).